A 401-amino-acid polypeptide reads, in one-letter code: Serine--glyoxylate aminotransferase (401 aa).

N-acetylmethionine is present on Met1. Pyridoxal 5'-phosphate is bound by residues 68-70 (TGT), Thr148, and 200-201 (QK). Residue Lys201 coordinates 3-hydroxypyruvate. Residue Lys201 is modified to N6-(pyridoxal phosphate)lysine. The residue at position 204 (Ser204) is a Phosphoserine. Arg347 contributes to the 3-hydroxypyruvate binding site. A Microbody targeting signal motif is present at residues 399–401 (SRI).

The protein belongs to the class-V pyridoxal-phosphate-dependent aminotransferase family. In terms of assembly, forms homodimers. Interacts with RABGAP22. The cofactor is pyridoxal 5'-phosphate. As to expression, widely expressed. Preferentially expressed in green, leafy tissues, root cortex and epidermis, developing siliques and dry seeds.

Its subcellular location is the peroxisome. The enzyme catalyses glyoxylate + L-serine = 3-hydroxypyruvate + glycine. It catalyses the reaction glyoxylate + L-alanine = glycine + pyruvate. The catalysed reaction is L-serine + pyruvate = 3-hydroxypyruvate + L-alanine. It carries out the reaction 3-hydroxypyruvate + L-asparagine = 2-oxosuccinamate + L-serine. The enzyme catalyses L-asparagine + glyoxylate = 2-oxosuccinamate + glycine. It catalyses the reaction L-asparagine + pyruvate = 2-oxosuccinamate + L-alanine. With respect to regulation, inhibited by aminooxyacetate and beta-chloro-L-alanine, but not by p-hydroxymercuribenzoate. Its function is as follows. Photorespiratory enzyme that catalyzes transamination reactions with multiple substrates, including asparagine. Functions exclusively as a catabolic enzyme in Asn metabolism. Involved in root development during seedling establishment after seed germination by regulating serine homeostasis and acetate conversion. This chain is Serine--glyoxylate aminotransferase, found in Arabidopsis thaliana (Mouse-ear cress).